A 202-amino-acid polypeptide reads, in one-letter code: Peptidyl-tRNA hydrolase (202 aa).

Tyrosine 16 contributes to the tRNA binding site. Residue histidine 21 is the Proton acceptor of the active site. TRNA contacts are provided by tyrosine 68, asparagine 70, and asparagine 116.

Belongs to the PTH family. Monomer.

It is found in the cytoplasm. The catalysed reaction is an N-acyl-L-alpha-aminoacyl-tRNA + H2O = an N-acyl-L-amino acid + a tRNA + H(+). In terms of biological role, hydrolyzes ribosome-free peptidyl-tRNAs (with 1 or more amino acids incorporated), which drop off the ribosome during protein synthesis, or as a result of ribosome stalling. Functionally, catalyzes the release of premature peptidyl moieties from peptidyl-tRNA molecules trapped in stalled 50S ribosomal subunits, and thus maintains levels of free tRNAs and 50S ribosomes. The polypeptide is Peptidyl-tRNA hydrolase (Treponema pallidum (strain Nichols)).